The following is a 323-amino-acid chain: tRNA dimethylallyltransferase (323 aa).

15–22 (GATGSGKT) lines the ATP pocket. 17 to 22 (TGSGKT) lines the substrate pocket. 2 interaction with substrate tRNA regions span residues 40 to 43 (DSRQ) and 164 to 168 (QRLIR).

It belongs to the IPP transferase family. In terms of assembly, monomer. Mg(2+) is required as a cofactor.

The enzyme catalyses adenosine(37) in tRNA + dimethylallyl diphosphate = N(6)-dimethylallyladenosine(37) in tRNA + diphosphate. Its function is as follows. Catalyzes the transfer of a dimethylallyl group onto the adenine at position 37 in tRNAs that read codons beginning with uridine, leading to the formation of N6-(dimethylallyl)adenosine (i(6)A). The chain is tRNA dimethylallyltransferase from Chloroherpeton thalassium (strain ATCC 35110 / GB-78).